Here is a 440-residue protein sequence, read N- to C-terminus: Probable pectate lyase 10 (440 aa).

The N-terminal stretch at 1–28 (MVIFSRSFLALSTTLIILALCINSSTMA) is a signal peptide. The disordered stretch occupies residues 32 to 56 (EDLNSHSSSNSSTANKLPNDDGAWN). Residues Asn41 and Asn76 are each glycosylated (N-linked (GlcNAc...) asparagine). Ca(2+) contacts are provided by Asp238, Asp262, and Asp266. The active site involves Arg318.

Belongs to the polysaccharide lyase 1 family. Requires Ca(2+) as cofactor.

The enzyme catalyses Eliminative cleavage of (1-&gt;4)-alpha-D-galacturonan to give oligosaccharides with 4-deoxy-alpha-D-galact-4-enuronosyl groups at their non-reducing ends.. Its pathway is glycan metabolism; pectin degradation; 2-dehydro-3-deoxy-D-gluconate from pectin: step 2/5. This chain is Probable pectate lyase 10, found in Arabidopsis thaliana (Mouse-ear cress).